We begin with the raw amino-acid sequence, 484 residues long: Aspartyl/glutamyl-tRNA(Asn/Gln) amidotransferase subunit B (484 aa).

It belongs to the GatB/GatE family. GatB subfamily. Heterotrimer of A, B and C subunits.

It carries out the reaction L-glutamyl-tRNA(Gln) + L-glutamine + ATP + H2O = L-glutaminyl-tRNA(Gln) + L-glutamate + ADP + phosphate + H(+). The enzyme catalyses L-aspartyl-tRNA(Asn) + L-glutamine + ATP + H2O = L-asparaginyl-tRNA(Asn) + L-glutamate + ADP + phosphate + 2 H(+). Its function is as follows. Allows the formation of correctly charged Asn-tRNA(Asn) or Gln-tRNA(Gln) through the transamidation of misacylated Asp-tRNA(Asn) or Glu-tRNA(Gln) in organisms which lack either or both of asparaginyl-tRNA or glutaminyl-tRNA synthetases. The reaction takes place in the presence of glutamine and ATP through an activated phospho-Asp-tRNA(Asn) or phospho-Glu-tRNA(Gln). The polypeptide is Aspartyl/glutamyl-tRNA(Asn/Gln) amidotransferase subunit B (Bordetella pertussis (strain Tohama I / ATCC BAA-589 / NCTC 13251)).